We begin with the raw amino-acid sequence, 236 residues long: 1-(5-phosphoribosyl)-5-[(5-phosphoribosylamino)methylideneamino] imidazole-4-carboxamide isomerase (236 aa).

The active-site Proton acceptor is the Asp-8. Asp-128 acts as the Proton donor in catalysis.

It belongs to the HisA/HisF family.

Its subcellular location is the cytoplasm. It catalyses the reaction 1-(5-phospho-beta-D-ribosyl)-5-[(5-phospho-beta-D-ribosylamino)methylideneamino]imidazole-4-carboxamide = 5-[(5-phospho-1-deoxy-D-ribulos-1-ylimino)methylamino]-1-(5-phospho-beta-D-ribosyl)imidazole-4-carboxamide. The protein operates within amino-acid biosynthesis; L-histidine biosynthesis; L-histidine from 5-phospho-alpha-D-ribose 1-diphosphate: step 4/9. This chain is 1-(5-phosphoribosyl)-5-[(5-phosphoribosylamino)methylideneamino] imidazole-4-carboxamide isomerase, found in Nitrosopumilus maritimus (strain SCM1).